The primary structure comprises 88 residues: Small ribosomal subunit protein uS17 (88 aa).

This sequence belongs to the universal ribosomal protein uS17 family. In terms of assembly, part of the 30S ribosomal subunit.

Its function is as follows. One of the primary rRNA binding proteins, it binds specifically to the 5'-end of 16S ribosomal RNA. This Syntrophotalea carbinolica (strain DSM 2380 / NBRC 103641 / GraBd1) (Pelobacter carbinolicus) protein is Small ribosomal subunit protein uS17.